Reading from the N-terminus, the 491-residue chain is Aspartyl/glutamyl-tRNA(Asn/Gln) amidotransferase subunit B (491 aa).

The protein belongs to the GatB/GatE family. GatB subfamily. As to quaternary structure, heterotrimer of A, B and C subunits.

The enzyme catalyses L-glutamyl-tRNA(Gln) + L-glutamine + ATP + H2O = L-glutaminyl-tRNA(Gln) + L-glutamate + ADP + phosphate + H(+). It carries out the reaction L-aspartyl-tRNA(Asn) + L-glutamine + ATP + H2O = L-asparaginyl-tRNA(Asn) + L-glutamate + ADP + phosphate + 2 H(+). In terms of biological role, allows the formation of correctly charged Asn-tRNA(Asn) or Gln-tRNA(Gln) through the transamidation of misacylated Asp-tRNA(Asn) or Glu-tRNA(Gln) in organisms which lack either or both of asparaginyl-tRNA or glutaminyl-tRNA synthetases. The reaction takes place in the presence of glutamine and ATP through an activated phospho-Asp-tRNA(Asn) or phospho-Glu-tRNA(Gln). This chain is Aspartyl/glutamyl-tRNA(Asn/Gln) amidotransferase subunit B, found in Paraburkholderia phytofirmans (strain DSM 17436 / LMG 22146 / PsJN) (Burkholderia phytofirmans).